Here is a 353-residue protein sequence, read N- to C-terminus: tRNA N(3)-cytidine methyltransferase METTL2 (353 aa).

Positions 1 to 37 (MAAPVVAADSPVIENMPETAGGATENSAEAQKRPQFG) are disordered. Residues W93, Y97, G165, D190, D216, and I237 each contribute to the S-adenosyl-L-methionine site.

This sequence belongs to the methyltransferase superfamily. METL family. As to quaternary structure, monomer.

Its subcellular location is the cytoplasm. It catalyses the reaction cytidine(32) in tRNA(Thr) + S-adenosyl-L-methionine = N(3)-methylcytidine(32) in tRNA(Thr) + S-adenosyl-L-homocysteine + H(+). The enzyme catalyses cytidine(32) in tRNA(Arg)(CCU) + S-adenosyl-L-methionine = N(3)-methylcytidine(32) in tRNA(Arg)(CCU) + S-adenosyl-L-homocysteine + H(+). In terms of biological role, S-adenosyl-L-methionine-dependent methyltransferase that mediates N(3)-methylcytidine modification of residue 32 of the tRNA anticodon loop of tRNA(Thr)(UGU) and tRNA(Arg)(CCU). N(3)-methylcytidine methylation by mettl2a requires the N6-threonylcarbamoylation of tRNA (t6A37) by the EKC/KEOPS complex as prerequisite. The sequence is that of tRNA N(3)-cytidine methyltransferase METTL2 (mettl2a) from Danio rerio (Zebrafish).